We begin with the raw amino-acid sequence, 452 residues long: Bifunctional protein GlmU (452 aa).

Positions 1–225 are pyrophosphorylase; that stretch reads MDVVILAAGL…ENELIGINTR (225 aa). UDP-N-acetyl-alpha-D-glucosamine-binding positions include 6–9, Lys-20, Gln-71, and 76–77; these read LAAG and GT. Mg(2+) is bound at residue Asp-99. Positions 136, 151, 166, and 223 each coordinate UDP-N-acetyl-alpha-D-glucosamine. Asn-223 serves as a coordination point for Mg(2+). Residues 226 to 246 form a linker region; sequence AELSLAMRYLRDRIVKGWMEK. The tract at residues 247 to 452 is N-acetyltransferase; it reads GITFYDPALV…LGWAKKKRKQ (206 aa). Positions 329 and 347 each coordinate UDP-N-acetyl-alpha-D-glucosamine. His-359 (proton acceptor) is an active-site residue. Tyr-362 and Asn-373 together coordinate UDP-N-acetyl-alpha-D-glucosamine. Residues Ala-376, 382–383, Ser-401, Ala-419, and Arg-436 contribute to the acetyl-CoA site; that span reads NY.

The protein in the N-terminal section; belongs to the N-acetylglucosamine-1-phosphate uridyltransferase family. This sequence in the C-terminal section; belongs to the transferase hexapeptide repeat family. Homotrimer. It depends on Mg(2+) as a cofactor.

The protein resides in the cytoplasm. It carries out the reaction alpha-D-glucosamine 1-phosphate + acetyl-CoA = N-acetyl-alpha-D-glucosamine 1-phosphate + CoA + H(+). It catalyses the reaction N-acetyl-alpha-D-glucosamine 1-phosphate + UTP + H(+) = UDP-N-acetyl-alpha-D-glucosamine + diphosphate. It participates in nucleotide-sugar biosynthesis; UDP-N-acetyl-alpha-D-glucosamine biosynthesis; N-acetyl-alpha-D-glucosamine 1-phosphate from alpha-D-glucosamine 6-phosphate (route II): step 2/2. The protein operates within nucleotide-sugar biosynthesis; UDP-N-acetyl-alpha-D-glucosamine biosynthesis; UDP-N-acetyl-alpha-D-glucosamine from N-acetyl-alpha-D-glucosamine 1-phosphate: step 1/1. Its pathway is bacterial outer membrane biogenesis; LPS lipid A biosynthesis. In terms of biological role, catalyzes the last two sequential reactions in the de novo biosynthetic pathway for UDP-N-acetylglucosamine (UDP-GlcNAc). The C-terminal domain catalyzes the transfer of acetyl group from acetyl coenzyme A to glucosamine-1-phosphate (GlcN-1-P) to produce N-acetylglucosamine-1-phosphate (GlcNAc-1-P), which is converted into UDP-GlcNAc by the transfer of uridine 5-monophosphate (from uridine 5-triphosphate), a reaction catalyzed by the N-terminal domain. This is Bifunctional protein GlmU from Thermodesulfovibrio yellowstonii (strain ATCC 51303 / DSM 11347 / YP87).